The following is a 784-amino-acid chain: Cell wall protein Lmo0130 (784 aa).

The N-terminal stretch at Met-1–Ala-34 is a signal peptide. A disordered region spans residues Ala-690 to Thr-761. Residues Gly-697–Gly-729 show a composition bias toward gly residues. Positions Gly-730–Gly-759 are enriched in low complexity. Positions Leu-755–Gly-759 match the LPXTG sorting signal motif. The residue at position 758 (Thr-758) is a Pentaglycyl murein peptidoglycan amidated threonine. The propeptide at Gly-759 to Ser-784 is removed by sortase A.

Its subcellular location is the secreted. The protein localises to the cell wall. The sequence is that of Cell wall protein Lmo0130 from Listeria monocytogenes serovar 1/2a (strain ATCC BAA-679 / EGD-e).